A 176-amino-acid polypeptide reads, in one-letter code: Inner membrane-spanning protein YciB (176 aa).

5 helical membrane-spanning segments follow: residues 3 to 23 (FLFD…WGIF), 49 to 69 (TMLW…LVLH), 72 to 92 (KFIQ…LVAA), 118 to 138 (KLNL…LYVV), and 149 to 169 (FKLF…SLWL).

It belongs to the YciB family.

It localises to the cell inner membrane. Functionally, plays a role in cell envelope biogenesis, maintenance of cell envelope integrity and membrane homeostasis. This is Inner membrane-spanning protein YciB from Burkholderia mallei (strain NCTC 10247).